The chain runs to 89 residues: Large ribosomal subunit protein eL43 (89 aa).

The Zn(2+) site is built by Cys-38, Cys-41, Cys-56, and Cys-59. The C4-type zinc finger occupies 38 to 59; it reads CPSCDRPGVKRESRGIWKCRKC.

The protein belongs to the eukaryotic ribosomal protein eL43 family. Putative zinc-binding subfamily. In terms of assembly, part of the 50S ribosomal subunit. Requires Zn(2+) as cofactor.

In terms of biological role, binds to the 23S rRNA. The polypeptide is Large ribosomal subunit protein eL43 (Methanothermobacter thermautotrophicus (strain ATCC 29096 / DSM 1053 / JCM 10044 / NBRC 100330 / Delta H) (Methanobacterium thermoautotrophicum)).